The sequence spans 375 residues: Probable UDP-N-acetylglucosamine 2-epimerase (375 aa).

The protein belongs to the UDP-N-acetylglucosamine 2-epimerase family.

The protein resides in the cytoplasm. It catalyses the reaction UDP-N-acetyl-alpha-D-glucosamine = UDP-N-acetyl-alpha-D-mannosamine. It functions in the pathway glycan metabolism; exopolysaccharide EPS I biosynthesis. May be involved in synthesis of N-acetyltrideoxygalactose, a component of exopolysaccharide EPS I which functions as a virulence factor. The protein is Probable UDP-N-acetylglucosamine 2-epimerase (epsC) of Ralstonia nicotianae (strain ATCC BAA-1114 / GMI1000) (Ralstonia solanacearum).